A 460-amino-acid chain; its full sequence is Probable carboxylesterase 11 (460 aa).

2 stretches are compositionally biased toward polar residues: residues 26–35 (QSSGDESSSD) and 132–145 (NSYG…SPEA). Disordered regions lie at residues 26–52 (QSSG…APNP) and 132–161 (NSYG…SSGG). The Involved in the stabilization of the negatively charged intermediate by the formation of the oxyanion hole motif lies at 173 to 175 (HGG). Residues serine 289, aspartate 392, and histidine 422 contribute to the active site.

It belongs to the 'GDXG' lipolytic enzyme family. As to expression, expressed in roots, leaves, stems, flowers and siliques.

It catalyses the reaction a carboxylic ester + H2O = an alcohol + a carboxylate + H(+). In terms of biological role, carboxylesterase acting on esters with varying acyl chain length. The chain is Probable carboxylesterase 11 (CXE11) from Arabidopsis thaliana (Mouse-ear cress).